The sequence spans 476 residues: UDP-glucose 6-dehydrogenase (476 aa).

Residues 7-12 (GAGYVG), Asp-32, Arg-37, 85-89 (VNTPT), 126-127 (ST), and Glu-161 each bind NAD(+). Substrate contacts are provided by residues 157–161 (EFLAE), 216–220 (KLAAN), Arg-256, and 263–269 (QASVGFG). Cys-272 (nucleophile) is an active-site residue. 272–275 (CFQK) provides a ligand contact to NAD(+). 334–335 (FK) contacts substrate. Arg-342 provides a ligand contact to NAD(+). Arg-439 is a substrate binding site.

This sequence belongs to the UDP-glucose/GDP-mannose dehydrogenase family.

It carries out the reaction UDP-alpha-D-glucose + 2 NAD(+) + H2O = UDP-alpha-D-glucuronate + 2 NADH + 3 H(+). The protein operates within nucleotide-sugar biosynthesis; UDP-alpha-D-glucuronate biosynthesis; UDP-alpha-D-glucuronate from UDP-alpha-D-glucose: step 1/1. Functionally, involved in the biosynthesis of glycosaminoglycans; hyaluronan, chondroitin sulfate and heparan sulfate. Required for wingless signaling in different tissues. The sequence is that of UDP-glucose 6-dehydrogenase (sgl) from Drosophila melanogaster (Fruit fly).